The sequence spans 297 residues: Large ribosomal subunit protein uL3 (297 aa).

Disordered regions lie at residues 124 to 143 (NQKI…PVRQ) and 258 to 297 (MKEK…DKGE).

It belongs to the universal ribosomal protein uL3 family. As to quaternary structure, part of the 50S ribosomal subunit. Forms a cluster with proteins L14 and L19.

Functionally, one of the primary rRNA binding proteins, it binds directly near the 3'-end of the 23S rRNA, where it nucleates assembly of the 50S subunit. The sequence is that of Large ribosomal subunit protein uL3 from Mycoplasma mobile (strain ATCC 43663 / 163K / NCTC 11711) (Mesomycoplasma mobile).